The chain runs to 266 residues: Hydroxyacylglutathione hydrolase (266 aa).

Zn(2+) is bound by residues His53, His55, Asp57, His58, His118, Asp140, and His178.

Belongs to the metallo-beta-lactamase superfamily. Glyoxalase II family. Monomer. Requires Zn(2+) as cofactor.

The catalysed reaction is an S-(2-hydroxyacyl)glutathione + H2O = a 2-hydroxy carboxylate + glutathione + H(+). It participates in secondary metabolite metabolism; methylglyoxal degradation; (R)-lactate from methylglyoxal: step 2/2. Its function is as follows. Thiolesterase that catalyzes the hydrolysis of S-D-lactoyl-glutathione to form glutathione and D-lactic acid. The sequence is that of Hydroxyacylglutathione hydrolase from Cupriavidus metallidurans (strain ATCC 43123 / DSM 2839 / NBRC 102507 / CH34) (Ralstonia metallidurans).